The primary structure comprises 966 residues: Alanine--tRNA ligase, cytoplasmic (966 aa).

Zn(2+) is bound by residues H604, H608, C723, and H727.

Belongs to the class-II aminoacyl-tRNA synthetase family. As to quaternary structure, monomer. Requires Zn(2+) as cofactor.

The protein localises to the cytoplasm. The enzyme catalyses tRNA(Ala) + L-alanine + ATP = L-alanyl-tRNA(Ala) + AMP + diphosphate. Catalyzes the attachment of alanine to tRNA(Ala) in a two-step reaction: alanine is first activated by ATP to form Ala-AMP and then transferred to the acceptor end of tRNA(Ala). Also edits incorrectly charged tRNA(Ala) via its editing domain. This Drosophila melanogaster (Fruit fly) protein is Alanine--tRNA ligase, cytoplasmic.